The sequence spans 444 residues: UDP-N-acetylglucosamine 1-carboxyvinyltransferase (444 aa).

Phosphoenolpyruvate is bound at residue 22–23 (KN). Arg-94 serves as a coordination point for UDP-N-acetyl-alpha-D-glucosamine. Asp-119 (proton donor) is an active-site residue. UDP-N-acetyl-alpha-D-glucosamine-binding residues include Asp-309 and Val-331.

The protein belongs to the EPSP synthase family. MurA subfamily.

It is found in the cytoplasm. It catalyses the reaction phosphoenolpyruvate + UDP-N-acetyl-alpha-D-glucosamine = UDP-N-acetyl-3-O-(1-carboxyvinyl)-alpha-D-glucosamine + phosphate. It participates in cell wall biogenesis; peptidoglycan biosynthesis. In terms of biological role, cell wall formation. Adds enolpyruvyl to UDP-N-acetylglucosamine. The polypeptide is UDP-N-acetylglucosamine 1-carboxyvinyltransferase (Chlamydia trachomatis serovar D (strain ATCC VR-885 / DSM 19411 / UW-3/Cx)).